We begin with the raw amino-acid sequence, 513 residues long: Pleiotropic regulator 1 (513 aa).

Residue methionine 1 is modified to N-acetylmethionine. 2 positions are modified to phosphoserine: serine 119 and serine 200. WD repeat units follow at residues 201 to 240 (GHLG…LKLS), 243 to 282 (GHIS…VIRH), 285 to 324 (GHLS…SVHT), 327 to 366 (GHTN…TRVT), 369 to 409 (NHKK…QNLS), 410 to 448 (GHNA…NFQR), and 459 to 498 (DSES…TEET). Serine 390 is subject to Phosphoserine.

This sequence belongs to the WD repeat PRL1/PRL2 family. As to quaternary structure, identified in the spliceosome C complex. Component of the PRP19-CDC5L splicing complex composed of a core complex comprising a homotetramer of PRPF19, CDC5L, PLRG1 and BCAS2, and at least three less stably associated proteins CTNNBL1, CWC15 and HSPA8. Interacts (via its WD40 repeat domain) directly with CDC5L (via its C-terminal); the interaction is required for mRNA splicing but not for spliceosome assembly. Component of the minor spliceosome, which splices U12-type introns. Within this complex, interacts with CRIPT. Also interacts directly in the complex with BCAS2 and PRPF19. Interacts with USB1.

Its subcellular location is the nucleus. It is found in the nucleus speckle. Involved in pre-mRNA splicing as component of the spliceosome. Component of the PRP19-CDC5L complex that forms an integral part of the spliceosome and is required for activating pre-mRNA splicing. As a component of the minor spliceosome, involved in the splicing of U12-type introns in pre-mRNAs. In Bos taurus (Bovine), this protein is Pleiotropic regulator 1 (PLRG1).